The primary structure comprises 155 residues: Endoribonuclease YbeY (155 aa).

Histidine 114, histidine 118, and histidine 124 together coordinate Zn(2+).

It belongs to the endoribonuclease YbeY family. It depends on Zn(2+) as a cofactor.

Its subcellular location is the cytoplasm. Its function is as follows. Single strand-specific metallo-endoribonuclease involved in late-stage 70S ribosome quality control and in maturation of the 3' terminus of the 16S rRNA. The polypeptide is Endoribonuclease YbeY (Escherichia coli O6:K15:H31 (strain 536 / UPEC)).